The primary structure comprises 193 residues: Holliday junction branch migration complex subunit RuvA (193 aa).

The segment at 1–64 is domain I; the sequence is MIGRIAGVLL…EDAHLLYGFG (64 aa). The domain II stretch occupies residues 65 to 139; the sequence is TAEERSTFRE…GKIGADLGAM (75 aa). Residues 139–143 are flexible linker; it reads MAGAA. The segment at 144–193 is domain III; the sequence is SASDHASDILNALLALGYSEKEALAAVKNVPAGTGVSEGIKLALKALSKG.

The protein belongs to the RuvA family. As to quaternary structure, homotetramer. Forms an RuvA(8)-RuvB(12)-Holliday junction (HJ) complex. HJ DNA is sandwiched between 2 RuvA tetramers; dsDNA enters through RuvA and exits via RuvB. An RuvB hexamer assembles on each DNA strand where it exits the tetramer. Each RuvB hexamer is contacted by two RuvA subunits (via domain III) on 2 adjacent RuvB subunits; this complex drives branch migration. In the full resolvosome a probable DNA-RuvA(4)-RuvB(12)-RuvC(2) complex forms which resolves the HJ.

The protein localises to the cytoplasm. The RuvA-RuvB-RuvC complex processes Holliday junction (HJ) DNA during genetic recombination and DNA repair, while the RuvA-RuvB complex plays an important role in the rescue of blocked DNA replication forks via replication fork reversal (RFR). RuvA specifically binds to HJ cruciform DNA, conferring on it an open structure. The RuvB hexamer acts as an ATP-dependent pump, pulling dsDNA into and through the RuvAB complex. HJ branch migration allows RuvC to scan DNA until it finds its consensus sequence, where it cleaves and resolves the cruciform DNA. In Paraburkholderia xenovorans (strain LB400), this protein is Holliday junction branch migration complex subunit RuvA.